A 355-amino-acid polypeptide reads, in one-letter code: UDP-N-acetylglucosamine--N-acetylmuramyl-(pentapeptide) pyrophosphoryl-undecaprenol N-acetylglucosamine transferase (355 aa).

UDP-N-acetyl-alpha-D-glucosamine-binding positions include 15 to 17 (TGG), Asn-127, Arg-163, Ser-191, Ile-244, 263 to 268 (ALTVSE), and Gln-288.

It belongs to the glycosyltransferase 28 family. MurG subfamily.

It is found in the cell inner membrane. It carries out the reaction di-trans,octa-cis-undecaprenyl diphospho-N-acetyl-alpha-D-muramoyl-L-alanyl-D-glutamyl-meso-2,6-diaminopimeloyl-D-alanyl-D-alanine + UDP-N-acetyl-alpha-D-glucosamine = di-trans,octa-cis-undecaprenyl diphospho-[N-acetyl-alpha-D-glucosaminyl-(1-&gt;4)]-N-acetyl-alpha-D-muramoyl-L-alanyl-D-glutamyl-meso-2,6-diaminopimeloyl-D-alanyl-D-alanine + UDP + H(+). The protein operates within cell wall biogenesis; peptidoglycan biosynthesis. Functionally, cell wall formation. Catalyzes the transfer of a GlcNAc subunit on undecaprenyl-pyrophosphoryl-MurNAc-pentapeptide (lipid intermediate I) to form undecaprenyl-pyrophosphoryl-MurNAc-(pentapeptide)GlcNAc (lipid intermediate II). In Salmonella choleraesuis (strain SC-B67), this protein is UDP-N-acetylglucosamine--N-acetylmuramyl-(pentapeptide) pyrophosphoryl-undecaprenol N-acetylglucosamine transferase.